Consider the following 125-residue polypeptide: Protein MGF 360-9L (125 aa).

This sequence belongs to the asfivirus MGF 360 family. In terms of assembly, interacts with host STAT1; this interaction mediates STAT1 degradation through apoptosis. Interacts with host STAT2; this interaction mediates STAT2 degradation through the proteasome.

The protein localises to the host cytoplasm. Its function is as follows. Plays a role in virus cell tropism, and may be required for efficient virus replication in macrophages. In addition, inhibits IFN-beta-induced IFN-stimulated genes (ISGs) transcription. Mechanistically, degrades host STAT1 and STAT2 through apoptosis and ubiquitin-proteasome pathways respectively. This African swine fever virus (strain Badajoz 1971 Vero-adapted) (Ba71V) protein is Protein MGF 360-9L.